The following is a 256-amino-acid chain: Photosystem I chlorophyll a/b-binding protein 5, chloroplastic (256 aa).

A chloroplast-targeting transit peptide spans 1 to 32 (MAVVLRGGITGGFLHHRRDASSVITRRISSVK). At alanine 33 the chain carries N-acetylalanine. Tryptophan 49 is a chlorophyll b binding site. Chlorophyll a-binding residues include phenylalanine 69 and glutamate 88. A chlorophyll b-binding site is contributed by arginine 93. Transmembrane regions (helical) follow at residues 94 to 113 (FAML…TTGI) and 129 to 146 (FAST…MGFA). Chlorophyll b is bound by residues glutamate 147 and arginine 150. Chlorophyll a is bound by residues lysine 205, glutamate 206, asparagine 209, arginine 211, glutamine 223, and histidine 238. A helical transmembrane segment spans residues 212–232 (LAMMAMLGFFVQASVTHTGPI).

It belongs to the light-harvesting chlorophyll a/b-binding (LHC) protein family. As to quaternary structure, the LHC complex consists of chlorophyll a-b binding proteins. Homodimer. Heterodimer with LHCA2 and, possibly, LHCA3. Can substitute to LHCA4 to form a complex with LHCA1. Binds pigments. Element of the NAD(P)H dehydrogenase-photosystem I supercomplex (NDH-PSI). The cofactor is Binds at least 14 chlorophylls (8 Chl-a and 6 Chl-b) and carotenoids such as lutein and neoxanthin.. Photoregulated by reversible phosphorylation of its threonine residues.

The protein localises to the plastid. It localises to the chloroplast thylakoid membrane. Its function is as follows. The light-harvesting complex (LHC) functions as a light receptor, it captures and delivers excitation energy to photosystems with which it is closely associated. Seems involved in the function of the photosystem I in low light conditions, when other LHCA proteins are less abundant. Required, together with LHCA6, for the formation of a full-size NAD(P)H dehydrogenase-photosystem I supercomplex (NDH-PSI) that triggers cyclic and chlororespiratory electron transport in chloroplast thylakoids, especially under stress conditions (e.g. increased light intensity). This is Photosystem I chlorophyll a/b-binding protein 5, chloroplastic from Arabidopsis thaliana (Mouse-ear cress).